Here is an 815-residue protein sequence, read N- to C-terminus: Glycogen phosphorylase (815 aa).

Lys-662 is modified (N6-(pyridoxal phosphate)lysine).

Belongs to the glycogen phosphorylase family. Requires pyridoxal 5'-phosphate as cofactor.

The catalysed reaction is [(1-&gt;4)-alpha-D-glucosyl](n) + phosphate = [(1-&gt;4)-alpha-D-glucosyl](n-1) + alpha-D-glucose 1-phosphate. Phosphorylase is an important allosteric enzyme in carbohydrate metabolism. Enzymes from different sources differ in their regulatory mechanisms and in their natural substrates. However, all known phosphorylases share catalytic and structural properties. The polypeptide is Glycogen phosphorylase (glgP) (Shigella flexneri).